The chain runs to 129 residues: Small ribosomal subunit protein uS11 (129 aa).

This sequence belongs to the universal ribosomal protein uS11 family. In terms of assembly, part of the 30S ribosomal subunit. Interacts with proteins S7 and S18. Binds to IF-3.

Functionally, located on the platform of the 30S subunit, it bridges several disparate RNA helices of the 16S rRNA. Forms part of the Shine-Dalgarno cleft in the 70S ribosome. The protein is Small ribosomal subunit protein uS11 of Methylobacillus flagellatus (strain ATCC 51484 / DSM 6875 / VKM B-1610 / KT).